A 238-amino-acid polypeptide reads, in one-letter code: Lactate utilization protein A (238 aa).

The protein belongs to the LutA/YkgE family.

Is involved in L-lactate degradation and allows cells to grow with lactate as the sole carbon source. In Geobacillus sp. (strain WCH70), this protein is Lactate utilization protein A.